Consider the following 537-residue polypeptide: Carboxypeptidase Y homolog A (537 aa).

An N-terminal signal peptide occupies residues 1-17 (MRLSTSALVLGAASSAV). Residues 18 to 124 (AFDQKVLGDL…RLDNYNLRAK (107 aa)) constitute a propeptide that is removed on maturation. 5 cysteine pairs are disulfide-bonded: C178-C418, C312-C326, C336-C359, C343-C352, and C381-C388. The N-linked (GlcNAc...) asparagine glycan is linked to N209. Residue S265 is part of the active site. The active site involves D457. N-linked (GlcNAc...) asparagine glycosylation is present at N503. H514 is an active-site residue.

The protein belongs to the peptidase S10 family.

The protein resides in the vacuole. It catalyses the reaction Release of a C-terminal amino acid with broad specificity.. Its function is as follows. Vacuolar carboxypeptidase involved in degradation of small peptides. Digests preferentially peptides containing an aliphatic or hydrophobic residue in P1' position, as well as methionine, leucine or phenylalanine in P1 position of ester substrate. In Fusarium vanettenii (strain ATCC MYA-4622 / CBS 123669 / FGSC 9596 / NRRL 45880 / 77-13-4) (Fusarium solani subsp. pisi), this protein is Carboxypeptidase Y homolog A (CPYA).